Reading from the N-terminus, the 383-residue chain is MGLRAAHTGFVVLVLLQSCAAYKLICYYTSWSQYREGDGSCFPDAIDPFLCTHVIYSFANISNNEIDTWEWNDVTLYDTLNTLKNRNPNLKTLLSVGGWNFGSQRFSKIASKTQSRRTFIKSVPPFLRTHGFDGLDLAWLYPGWRDKRHLTTLVKEMKAEFVREAQAGTEQLLLSAAVPAGKIAIDRGYDIAQISRHLDFISLLTYDFHGAWRQTVGHHSPLFRGQEDASSDRFSNADYAVSYMLRLGAPANKLVMGIPTFGRSYTLASSKTDVGAPISGPGIPGQFTKEKGILAYYEICDFLHGATTHRFRDQQVPYATKGNQWVAYDDQESVKNKARYLKNRQLAGAMVWALDLDDFRGTFCGQNLTFPLTSAIKDVLARV.

The first 21 residues, 1 to 21 (MGLRAAHTGFVVLVLLQSCAA), serve as a signal peptide directing secretion. Residues 22–383 (YKLICYYTSW…SAIKDVLARV (362 aa)) form the GH18 domain. A disulfide bridge links C26 with C51. N60 carries an N-linked (GlcNAc...) asparagine glycan. Chitin contacts are provided by residues 70–71 (EW), 97–100 (GGWN), Y141, 204–207 (LTYD), and R263. A disulfide bond links C300 and C364. The important for AKT1 activation and IL8 production stretch occupies residues 324–338 (QWVAYDDQESVKNKA). Residue W352 coordinates chitin. N367 is a glycosylation site (N-linked (GlcNAc...) asparagine).

It belongs to the glycosyl hydrolase 18 family. As to quaternary structure, monomer. Post-translationally, glycosylated. Mammary secretions collected during the non-lactating period.

The protein localises to the secreted. Its subcellular location is the extracellular space. It localises to the cytoplasm. It is found in the perinuclear region. The protein resides in the endoplasmic reticulum. Functionally, carbohydrate-binding lectin with a preference for chitin. Has no chitinase activity. May play a role in tissue remodeling and in the capacity of cells to respond to and cope with changes in their environment. Plays a role in T-helper cell type 2 (Th2) inflammatory response and IL-13-induced inflammation, regulating allergen sensitization, inflammatory cell apoptosis, dendritic cell accumulation and M2 macrophage differentiation. Facilitates invasion of pathogenic enteric bacteria into colonic mucosa and lymphoid organs. Mediates activation of AKT1 signaling pathway and subsequent IL8 production in colonic epithelial cells. Regulates antibacterial responses in lung by contributing to macrophage bacterial killing, controlling bacterial dissemination and augmenting host tolerance. Also regulates hyperoxia-induced injury, inflammation and epithelial apoptosis in lung. In Bos taurus (Bovine), this protein is Chitinase-3-like protein 1 (CHI3L1).